Here is a 683-residue protein sequence, read N- to C-terminus: E3 ubiquitin-protein ligase WAVH1 (683 aa).

The RING-type; atypical zinc-finger motif lies at 130–176 (CGICLQSVKSGQGTAIFTAECSHTFHFPCVTSRAAANHNRLASCPVC). The 137-residue stretch at 302 to 438 (DLVAVLDVSG…AHSRIPIHTI (137 aa)) folds into the VWFA domain.

Expressed in root tips and leaf primordia.

It catalyses the reaction S-ubiquitinyl-[E2 ubiquitin-conjugating enzyme]-L-cysteine + [acceptor protein]-L-lysine = [E2 ubiquitin-conjugating enzyme]-L-cysteine + N(6)-ubiquitinyl-[acceptor protein]-L-lysine.. E3 ubiquitin-protein ligase involved in the regulation of root growth. Acts as a positive regulator of root gravitropism. Possesses E3 protein ligase activity in vitro. In Arabidopsis thaliana (Mouse-ear cress), this protein is E3 ubiquitin-protein ligase WAVH1.